The chain runs to 171 residues: Pro-corazonin (171 aa).

The first 20 residues, 1-20 (MLHTRTIALLLVGLVVLVNA), serve as a signal peptide directing secretion. Position 21 is a pyrrolidone carboxylic acid (Gln-21). An Asparagine amide modification is found at Asn-31. A propeptide spanning residues 82-171 (FLRNPCDLRV…GFSDHRQKIA (90 aa)) is cleaved from the precursor.

This sequence belongs to the corazonin family.

It localises to the secreted. Functionally, cardioactive peptide. Corazonin is probably involved in the physiological regulation of the heart beat. The polypeptide is Pro-corazonin (Anopheles gambiae (African malaria mosquito)).